The sequence spans 367 residues: Cyclin-D3-2 (367 aa).

Residues 324–335 (STTASVSSSSSS) show a composition bias toward low complexity. A disordered region spans residues 324-347 (STTASVSSSSSSPEPLLKRRRVQE).

Belongs to the cyclin family. Cyclin D subfamily. In terms of assembly, interacts with CDKA-1. As to expression, expressed in developing vegetative and floral primordia.

In terms of biological role, promotes divisions in the guard cells (GCs) after the guard mother cells (GMC) symmetric division when in the presence of CDKA-1. This chain is Cyclin-D3-2 (CYCD3-2), found in Arabidopsis thaliana (Mouse-ear cress).